We begin with the raw amino-acid sequence, 1453 residues long: Clustered mitochondria protein homolog (1453 aa).

The segment covering 78-101 (LSENGQENSPHNSDSGHETSSPDS) has biased composition (polar residues). A disordered region spans residues 78–110 (LSENGQENSPHNSDSGHETSSPDSPLTPIEEGA). Positions 439 to 690 (EDGIRAEDCT…RTFPPDVNYL (252 aa)) constitute a Clu domain. Residues 979–1015 (PLTPSNEEVSMPINSVKKSRSSKRRKQISSGGKENDD) are disordered. The segment covering 995 to 1005 (KKSRSSKRRKQ) has biased composition (basic residues). 2 TPR repeats span residues 1235-1268 (AEIDGNIGVILYAVQEFDDALKFLQNALKLHQIY) and 1277-1310 (ALIYHLLARTYSCRGDFRTALQMEKETFTIYSKT).

This sequence belongs to the CLU family.

It is found in the cytoplasm. Its function is as follows. mRNA-binding protein involved in proper cytoplasmic distribution of mitochondria. The sequence is that of Clustered mitochondria protein homolog from Brugia malayi (Filarial nematode worm).